We begin with the raw amino-acid sequence, 470 residues long: ATP synthase subunit beta 2 (470 aa).

155 to 162 (GGAGVGKT) serves as a coordination point for ATP.

Belongs to the ATPase alpha/beta chains family. As to quaternary structure, F-type ATPases have 2 components, CF(1) - the catalytic core - and CF(0) - the membrane proton channel. CF(1) has five subunits: alpha(3), beta(3), gamma(1), delta(1), epsilon(1). CF(0) has three main subunits: a(1), b(2) and c(9-12). The alpha and beta chains form an alternating ring which encloses part of the gamma chain. CF(1) is attached to CF(0) by a central stalk formed by the gamma and epsilon chains, while a peripheral stalk is formed by the delta and b chains.

It localises to the cell inner membrane. The catalysed reaction is ATP + H2O + 4 H(+)(in) = ADP + phosphate + 5 H(+)(out). Produces ATP from ADP in the presence of a proton gradient across the membrane. The catalytic sites are hosted primarily by the beta subunits. In Nitrosospira multiformis (strain ATCC 25196 / NCIMB 11849 / C 71), this protein is ATP synthase subunit beta 2.